The chain runs to 218 residues: Superoxide dismutase [Mn] 1 (218 aa).

Mn(2+)-binding residues include H43, H98, D180, and H184.

This sequence belongs to the iron/manganese superoxide dismutase family. Homodimer. The cofactor is Mn(2+).

The catalysed reaction is 2 superoxide + 2 H(+) = H2O2 + O2. Its function is as follows. Destroys superoxide anion radicals which are normally produced within the cells and which are toxic to biological systems. The chain is Superoxide dismutase [Mn] 1 (sodA1) from Bacillus cereus (strain ATCC 14579 / DSM 31 / CCUG 7414 / JCM 2152 / NBRC 15305 / NCIMB 9373 / NCTC 2599 / NRRL B-3711).